Reading from the N-terminus, the 523-residue chain is Mitochondrial distribution and morphology protein 34 (523 aa).

Residues 1 to 200 enclose the SMP-LTD domain; it reads MSFKVNWKSL…LPTLIHQFSL (200 aa). The interval 489 to 523 is disordered; it reads ELSMDRSGKRKQRNYGSATYESENPIVAPPPPYSH.

Belongs to the MDM34 family. In terms of assembly, component of the ER-mitochondria encounter structure (ERMES) or MDM complex, composed of MMM1, MDM10, MDM12 and MDM34.

It localises to the mitochondrion outer membrane. Its function is as follows. Component of the ERMES/MDM complex, which serves as a molecular tether to connect the endoplasmic reticulum (ER) and mitochondria. Components of this complex are involved in the control of mitochondrial shape and protein biogenesis, and function in nonvesicular lipid trafficking between the ER and mitochondria. MDM34 is required for the interaction of the ER-resident membrane protein MMM1 and the outer mitochondrial membrane-resident beta-barrel protein MDM10. In Scheffersomyces stipitis (strain ATCC 58785 / CBS 6054 / NBRC 10063 / NRRL Y-11545) (Yeast), this protein is Mitochondrial distribution and morphology protein 34.